The sequence spans 440 residues: Histidinol dehydrogenase (440 aa).

NAD(+)-binding residues include tyrosine 139, glutamine 201, and asparagine 224. Substrate contacts are provided by serine 247, glutamine 269, and histidine 272. Residues glutamine 269 and histidine 272 each coordinate Zn(2+). Residues glutamate 337 and histidine 338 each act as proton acceptor in the active site. Substrate-binding residues include histidine 338, aspartate 371, glutamate 425, and histidine 430. Aspartate 371 lines the Zn(2+) pocket. Histidine 430 provides a ligand contact to Zn(2+).

The protein belongs to the histidinol dehydrogenase family. Requires Zn(2+) as cofactor.

It catalyses the reaction L-histidinol + 2 NAD(+) + H2O = L-histidine + 2 NADH + 3 H(+). The protein operates within amino-acid biosynthesis; L-histidine biosynthesis; L-histidine from 5-phospho-alpha-D-ribose 1-diphosphate: step 9/9. In terms of biological role, catalyzes the sequential NAD-dependent oxidations of L-histidinol to L-histidinaldehyde and then to L-histidine. The polypeptide is Histidinol dehydrogenase (Prochlorococcus marinus (strain MIT 9312)).